The sequence spans 65 residues: Large ribosomal subunit protein uL29 (65 aa).

It belongs to the universal ribosomal protein uL29 family.

The sequence is that of Large ribosomal subunit protein uL29 from Methylococcus capsulatus (strain ATCC 33009 / NCIMB 11132 / Bath).